The primary structure comprises 274 residues: Glycerol uptake facilitator protein (274 aa).

The next 2 membrane-spanning stretches (helical) occupy residues Ala-3–Ala-23 and Ile-38–Ile-58. Residues Asn-64 to Ala-66 carry the NPA 1 motif. 3 consecutive transmembrane segments (helical) span residues Val-82–Leu-102, Phe-131–Ile-151, and Ile-164–Ile-184. An NPA 2 motif is present at residues Asn-185 to Ala-187. Residues Ile-238–Val-258 traverse the membrane as a helical segment.

The protein belongs to the MIP/aquaporin (TC 1.A.8) family.

The protein localises to the cell membrane. It catalyses the reaction glycerol(in) = glycerol(out). Mediates glycerol diffusion across the cytoplasmic membrane via a pore-type mechanism. This chain is Glycerol uptake facilitator protein (glpF), found in Bacillus subtilis (strain 168).